The sequence spans 75 residues: High-potential iron-sulfur protein (75 aa).

The [4Fe-4S] cluster site is built by C38, C41, C54, and C68.

Homodimer. Monomer at different ionic strengths.

Specific class of high-redox-potential 4Fe-4S ferredoxins. Functions in anaerobic electron transport in most purple and in some other photosynthetic bacteria and in at least one genus (Paracoccus) of halophilic, denitrifying bacteria. Competent in photosynthetic electron transfer to oxidized cytochrome bc1 complex via the membrane-bound c-type tetraheme. The protein is High-potential iron-sulfur protein (hip) of Rhodoferax fermentans.